Here is a 208-residue protein sequence, read N- to C-terminus: Proteasome subunit beta 2 (208 aa).

Residues 1 to 9 constitute a propeptide, removed in mature form; by autocatalysis; that stretch reads MSGKKIVSK. Residue Thr10 is the Nucleophile of the active site.

The protein belongs to the peptidase T1B family. In terms of assembly, the 20S proteasome core is composed of 14 alpha and 14 beta subunits that assemble into four stacked heptameric rings, resulting in a barrel-shaped structure. The two inner rings, each composed of seven catalytic beta subunits, are sandwiched by two outer rings, each composed of seven alpha subunits. The catalytic chamber with the active sites is on the inside of the barrel. Has a gated structure, the ends of the cylinder being occluded by the N-termini of the alpha-subunits. Is capped at one or both ends by the proteasome regulatory ATPase, PAN.

It is found in the cytoplasm. It catalyses the reaction Cleavage of peptide bonds with very broad specificity.. With respect to regulation, the formation of the proteasomal ATPase PAN-20S proteasome complex, via the docking of the C-termini of PAN into the intersubunit pockets in the alpha-rings, triggers opening of the gate for substrate entry. Interconversion between the open-gate and close-gate conformations leads to a dynamic regulation of the 20S proteasome proteolysis activity. In terms of biological role, component of the proteasome core, a large protease complex with broad specificity involved in protein degradation. The sequence is that of Proteasome subunit beta 2 from Staphylothermus marinus (strain ATCC 43588 / DSM 3639 / JCM 9404 / F1).